The chain runs to 486 residues: Cardiolipin synthase A (486 aa).

A run of 2 helical transmembrane segments spans residues 3-23 and 38-58; these read TVYT…IAGV and MAWL…YLAV. 2 PLD phosphodiesterase domains span residues 219–246 and 399–426; these read MDLR…VDPR and EGGL…DMRS. Active-site residues include histidine 224, lysine 226, aspartate 231, histidine 404, lysine 406, and aspartate 411.

This sequence belongs to the phospholipase D family. Cardiolipin synthase subfamily. ClsA sub-subfamily.

It localises to the cell inner membrane. The enzyme catalyses 2 a 1,2-diacyl-sn-glycero-3-phospho-(1'-sn-glycerol) = a cardiolipin + glycerol. Functionally, catalyzes the reversible phosphatidyl group transfer from one phosphatidylglycerol molecule to another to form cardiolipin (CL) (diphosphatidylglycerol) and glycerol. In Shigella dysenteriae serotype 1 (strain Sd197), this protein is Cardiolipin synthase A.